A 110-amino-acid chain; its full sequence is UPF0060 membrane protein ASA_2267 (110 aa).

4 helical membrane-spanning segments follow: residues 7–27 (IGLFLITAVAEIVGCYLPYLW), 33–53 (SVWLLLPAGLSLVLFAWLLSL), 63–83 (AAYGGVYIFVAILWLWLVDGI), and 87–107 (LWDLVGSLVALFGMAIIMFAP).

The protein belongs to the UPF0060 family.

It is found in the cell inner membrane. This chain is UPF0060 membrane protein ASA_2267, found in Aeromonas salmonicida (strain A449).